A 137-amino-acid polypeptide reads, in one-letter code: Ribonuclease VapC27 (137 aa).

A PINc domain is found at 7 to 125 (VDTSVAIPLL…ATRDARAKDT (119 aa)). Positions 8 and 101 each coordinate Mg(2+).

It belongs to the PINc/VapC protein family. In terms of assembly, interacts with cognate antitoxin VapB27. Mg(2+) serves as cofactor.

Its subcellular location is the secreted. Its function is as follows. Probably the toxic component of a type II toxin-antitoxin (TA) system. An RNase. Its cognate antitoxin is VapB27. The protein is Ribonuclease VapC27 of Mycobacterium tuberculosis (strain ATCC 25618 / H37Rv).